A 274-amino-acid chain; its full sequence is Bis(5'-nucleosyl)-tetraphosphatase, symmetrical (274 aa).

This sequence belongs to the Ap4A hydrolase family.

The enzyme catalyses P(1),P(4)-bis(5'-adenosyl) tetraphosphate + H2O = 2 ADP + 2 H(+). Functionally, hydrolyzes diadenosine 5',5'''-P1,P4-tetraphosphate to yield ADP. This chain is Bis(5'-nucleosyl)-tetraphosphatase, symmetrical, found in Shewanella loihica (strain ATCC BAA-1088 / PV-4).